A 1182-amino-acid polypeptide reads, in one-letter code: Intraflagellar transport protein 122 homolog (1182 aa).

WD repeat units follow at residues 10 to 50, 51 to 91, 93 to 129, 131 to 169, 174 to 217, 219 to 258, 260 to 300, and 453 to 492; these read KAEQ…QPLK, GHKD…LKYT, NDSI…VSKH, SSSK…KVKI, GSLS…IGKD, PLNF…LGTV, EQNS…HGLY, and KQAT…LLFQ.

Component of the IFT complex A (IFT-A) complex. IFT-A complex is divided into a core subcomplex composed of IFT122:IFT140:WDR19 which is associated with TULP3 and a peripheral subcomplex composed of IFT43:WDR35:TTC21B. Interacts with IFT43:WDR35; the interaction connects the 2 IFT-A subcomplexes. Interacts with IFTAP; the interaction associates IFTAP with IFT-A complex.

Its subcellular location is the cell projection. The protein resides in the cilium. The protein localises to the cytoplasm. It localises to the cytoskeleton. It is found in the cilium basal body. Its function is as follows. As a component of the IFT complex A (IFT-A), a complex required for retrograde ciliary transport and entry into cilia of G protein-coupled receptors (GPCRs), it is required in ciliogenesis and ciliary protein trafficking. Involved in cilia formation during neuronal patterning. Acts as a negative regulator of Shh signaling. Required to recruit TULP3 to primary cilia. The protein is Intraflagellar transport protein 122 homolog of Mus musculus (Mouse).